Here is a 70-residue protein sequence, read N- to C-terminus: Beta-defensin 43 (70 aa).

The first 22 residues, 1-22 (MRLLLSILGVLTLLSILPLARS), serve as a signal peptide directing secretion. 2 cysteine pairs are disulfide-bonded: cysteine 29-cysteine 57 and cysteine 36-cysteine 50.

This sequence belongs to the beta-defensin family.

It localises to the secreted. Functionally, has bactericidal activity. The chain is Beta-defensin 43 (Defb43) from Rattus norvegicus (Rat).